Here is a 497-residue protein sequence, read N- to C-terminus: MSNYVLALDQGTTSSRAILFTREGDIKQISQKEFTQIYPQPGWVEHNANEIFDTQSWVMRECLQEAGIGAADVVAAGITNQRETTVVWDKATGAPVYNAIVWQDRRTAGFCDELKARGLADVFRKKTGLVLDAYFSGTKVRWILDNVPGARAKAEKGELLFGTIDTWLIWNLTKGKAHVTDSSNASRTLMFNINTGAWDDELLGILDVPRSMLPRVTGSSEVVGDIHPEFLGKAIPIAGNAGDQQAATYGNACLKPGMAKNTYGTGCFMLMNTGTEVRSSQNNLLSTVAWTTPSGRFYALEGSVFIAGAVVQWLRDGLGIIKAAPEVEQLALSVPDNGGVYLVPAFAGLGAPHWDQYARGTMVGITRGATKAHIARAALESIALQTLDIMDCMQKDSGIKLAALRADGGATRNNLLMQFQADVLGVPVERPKVTETTALGAAYLAGLATGFWKSEDEIATMWQLDRRFEPNMSDDKRQHLVYEWQRAVERAKAWVEA.

Position 12 (Thr-12) interacts with ADP. Residues Thr-12, Thr-13, and Ser-14 each contribute to the ATP site. Thr-12 is a sn-glycerol 3-phosphate binding site. Arg-16 is an ADP binding site. Sn-glycerol 3-phosphate is bound by residues Arg-82, Glu-83, Tyr-134, and Asp-243. Residues Arg-82, Glu-83, Tyr-134, Asp-243, and Gln-244 each coordinate glycerol. Residues Thr-265 and Gly-308 each coordinate ADP. Residues Thr-265, Gly-308, Gln-312, and Gly-409 each contribute to the ATP site. ADP-binding residues include Gly-409 and Asn-413.

This sequence belongs to the FGGY kinase family.

It carries out the reaction glycerol + ATP = sn-glycerol 3-phosphate + ADP + H(+). Its pathway is polyol metabolism; glycerol degradation via glycerol kinase pathway; sn-glycerol 3-phosphate from glycerol: step 1/1. With respect to regulation, inhibited by fructose 1,6-bisphosphate (FBP). In terms of biological role, key enzyme in the regulation of glycerol uptake and metabolism. Catalyzes the phosphorylation of glycerol to yield sn-glycerol 3-phosphate. This chain is Glycerol kinase, found in Nitratidesulfovibrio vulgaris (strain ATCC 29579 / DSM 644 / CCUG 34227 / NCIMB 8303 / VKM B-1760 / Hildenborough) (Desulfovibrio vulgaris).